The sequence spans 226 residues: tRNA (guanine-N(7)-)-methyltransferase (226 aa).

Positions 57, 82, 109, and 132 each coordinate S-adenosyl-L-methionine. Asp-132 is a catalytic residue. Residues Lys-136, Asp-168, and 205–208 contribute to the substrate site; that span reads TKFE.

This sequence belongs to the class I-like SAM-binding methyltransferase superfamily. TrmB family.

The catalysed reaction is guanosine(46) in tRNA + S-adenosyl-L-methionine = N(7)-methylguanosine(46) in tRNA + S-adenosyl-L-homocysteine. It functions in the pathway tRNA modification; N(7)-methylguanine-tRNA biosynthesis. Functionally, catalyzes the formation of N(7)-methylguanine at position 46 (m7G46) in tRNA. The protein is tRNA (guanine-N(7)-)-methyltransferase of Legionella pneumophila subsp. pneumophila (strain Philadelphia 1 / ATCC 33152 / DSM 7513).